We begin with the raw amino-acid sequence, 121 residues long: Outer membrane lipoprotein BBA14 (121 aa).

Residues 1-19 form the signal peptide; sequence MQIKNFPFLFLLNSLIIFS. The N-palmitoyl cysteine moiety is linked to residue Cys20. Cys20 carries the S-diacylglycerol cysteine lipid modification.

The protein localises to the cell outer membrane. Its function is as follows. Outer membrane lipoprotein that could act as a component of a potential toxin-antitoxin system in B.burgdorferi which could serve as a plasmid stabilization mechanism in a growing bacterial population. The protein is Outer membrane lipoprotein BBA14 of Borreliella burgdorferi (strain ATCC 35210 / DSM 4680 / CIP 102532 / B31) (Borrelia burgdorferi).